Consider the following 842-residue polypeptide: Glucans biosynthesis glucosyltransferase H (842 aa).

7 helical membrane passes run 140–160 (ILLLLTLAQTVVATWYMKTIL), 194–214 (ILILFAVLFCWVSAGFWTALM), 513–533 (VFLTGVMSYLSAPLWFMFLAL), 570–590 (LFASTMVLLFLPKLLSIMLIW), 615–635 (VLLAPVRMLFHTVFVVSAFLG), 656–676 (FMRHGSQLLLGLVWAVGMAWL), and 680–700 (FLFWLAPIVFSLILSPFVSVV).

It belongs to the glycosyltransferase 2 family. OpgH subfamily.

Its subcellular location is the cell inner membrane. It participates in glycan metabolism; osmoregulated periplasmic glucan (OPG) biosynthesis. Involved in the biosynthesis of osmoregulated periplasmic glucans (OPGs). The sequence is that of Glucans biosynthesis glucosyltransferase H from Citrobacter koseri (strain ATCC BAA-895 / CDC 4225-83 / SGSC4696).